A 308-amino-acid polypeptide reads, in one-letter code: MTEQQISRTQAWLESLRPKTLPLAFAAIIVGTALAWWQGHFDPLVALLALITAGLLQILSNLANDYGDAVKGSDKPDRIGPLRGMQKGVITQQEMKRALIITVVLICLSGLALVAVACHTLADFVGFLILGGLSIIAAITYTVGNRPYGYIGLGDISVLVFFGWLSVMGSWYLQAHTLIPALILPATACGLLATAVLNINNLRDINSDRENGKNTLVVRLGEVNARRYHACLLMGSLVCLALFNLFSLHSLWGWLFLLAAPLLVKQARYVMREMDPVAMRPMLERTVKGALLTNLLFVLGIFLSQWAA.

The Cytoplasmic segment spans residues M1–T20. The chain crosses the membrane as a helical span at residues L21–F41. A topological domain (periplasmic) is located at residue D42. The helical transmembrane segment at P43–A63 threads the bilayer. The Cytoplasmic portion of the chain corresponds to N64–R97. A helical transmembrane segment spans residues A98–C118. Topologically, residues H119–D123 are periplasmic. A helical membrane pass occupies residues F124–G144. The Cytoplasmic segment spans residues N145–Y148. The chain crosses the membrane as a helical span at residues G149–G169. Over S170–H176 the chain is Periplasmic. A helical membrane pass occupies residues T177–L197. Residues N198–R227 are Cytoplasmic-facing. The helical transmembrane segment at Y228–S247 threads the bilayer. At L248–S250 the chain is on the periplasmic side. The helical transmembrane segment at L251–V270 threads the bilayer. At M271–T286 the chain is on the cytoplasmic side. Residues V287–A307 traverse the membrane as a helical segment. Position 308 (A308) is a topological domain, periplasmic.

Belongs to the MenA family. Type 1 subfamily.

It localises to the cell inner membrane. It catalyses the reaction an all-trans-polyprenyl diphosphate + 1,4-dihydroxy-2-naphthoate + H(+) = a 2-demethylmenaquinol + CO2 + diphosphate. Its pathway is quinol/quinone metabolism; menaquinone biosynthesis; menaquinol from 1,4-dihydroxy-2-naphthoate: step 1/2. Its function is as follows. Conversion of 1,4-dihydroxy-2-naphthoate (DHNA) to demethylmenaquinone (DMK). Attaches octaprenylpyrophosphate, a membrane-bound 40-carbon side chain to DHNA. The conversion of DHNA to DMK proceeds in three stages: the removal of the carboxyl group of DHNA as CO(2), the attachment of the isoprenoid side chain, and a quinol-to-quinone oxidation, which is thought to be spontaneous. The chain is 1,4-dihydroxy-2-naphthoate octaprenyltransferase from Escherichia coli (strain K12).